A 488-amino-acid chain; its full sequence is Aspartyl/glutamyl-tRNA(Asn/Gln) amidotransferase subunit B (488 aa).

This sequence belongs to the GatB/GatE family. GatB subfamily. Heterotrimer of A, B and C subunits.

The catalysed reaction is L-glutamyl-tRNA(Gln) + L-glutamine + ATP + H2O = L-glutaminyl-tRNA(Gln) + L-glutamate + ADP + phosphate + H(+). It carries out the reaction L-aspartyl-tRNA(Asn) + L-glutamine + ATP + H2O = L-asparaginyl-tRNA(Asn) + L-glutamate + ADP + phosphate + 2 H(+). Allows the formation of correctly charged Asn-tRNA(Asn) or Gln-tRNA(Gln) through the transamidation of misacylated Asp-tRNA(Asn) or Glu-tRNA(Gln) in organisms which lack either or both of asparaginyl-tRNA or glutaminyl-tRNA synthetases. The reaction takes place in the presence of glutamine and ATP through an activated phospho-Asp-tRNA(Asn) or phospho-Glu-tRNA(Gln). In Neorickettsia sennetsu (strain ATCC VR-367 / Miyayama) (Ehrlichia sennetsu), this protein is Aspartyl/glutamyl-tRNA(Asn/Gln) amidotransferase subunit B.